Consider the following 151-residue polypeptide: MSDWESHTVIGQKARAGGSGPRANVARTQGQINAARRQGLVLSVDKKYGTANTKGDAEGQRLTKVDRETDIVKPKKLDANVGKTIARVRTEKKMSQKDLATKINEKPTVINDYEAGRAIPNQQVLGKMERALGVKLRGKAIGEPLGGPKKK.

The segment at 1–31 (MSDWESHTVIGQKARAGGSGPRANVARTQGQ) is disordered. The HTH cro/C1-type domain occupies 85–139 (IARVRTEKKMSQKDLATKINEKPTVINDYEAGRAIPNQQVLGKMERALGVKLRGK). Positions 96 to 115 (QKDLATKINEKPTVINDYEA) form a DNA-binding region, H-T-H motif.

The protein belongs to the MBF1 family.

Its function is as follows. Transcriptional coactivator that stimulates GCN4-dependent transcriptional activity by bridging the DNA-binding region of GCN4 and TBP (SPT15), thereby recruiting TBP to GCN4-bound promoters. Involved in induction of the ribosome quality control (RQC) pathway; a pathway that degrades nascent peptide chains during problematic translation. Required to prevent stalled ribosomes from frameshifting. The protein is Multiprotein-bridging factor 1 (MBF1) of Candida glabrata (strain ATCC 2001 / BCRC 20586 / JCM 3761 / NBRC 0622 / NRRL Y-65 / CBS 138) (Yeast).